Here is a 291-residue protein sequence, read N- to C-terminus: 4-diphosphocytidyl-2-C-methyl-D-erythritol kinase (291 aa).

The active site involves Lys19. 102–112 (PMGGGIGGGSS) contacts ATP. The active site involves Asp144.

It belongs to the GHMP kinase family. IspE subfamily.

The enzyme catalyses 4-CDP-2-C-methyl-D-erythritol + ATP = 4-CDP-2-C-methyl-D-erythritol 2-phosphate + ADP + H(+). It functions in the pathway isoprenoid biosynthesis; isopentenyl diphosphate biosynthesis via DXP pathway; isopentenyl diphosphate from 1-deoxy-D-xylulose 5-phosphate: step 3/6. Functionally, catalyzes the phosphorylation of the position 2 hydroxy group of 4-diphosphocytidyl-2C-methyl-D-erythritol. This Ectopseudomonas mendocina (strain ymp) (Pseudomonas mendocina) protein is 4-diphosphocytidyl-2-C-methyl-D-erythritol kinase.